The following is a 421-amino-acid chain: Imidazolonepropionase (421 aa).

Fe(3+) is bound by residues His-81 and His-83. His-81 and His-83 together coordinate Zn(2+). Arg-90, Tyr-153, and His-186 together coordinate 4-imidazolone-5-propanoate. Residue Tyr-153 participates in N-formimidoyl-L-glutamate binding. His-251 provides a ligand contact to Fe(3+). His-251 contributes to the Zn(2+) binding site. Glu-254 serves as a coordination point for 4-imidazolone-5-propanoate. A Fe(3+)-binding site is contributed by Asp-326. Asp-326 is a Zn(2+) binding site. Residues Asn-328 and Gly-330 each coordinate N-formimidoyl-L-glutamate. Ser-331 serves as a coordination point for 4-imidazolone-5-propanoate.

The protein belongs to the metallo-dependent hydrolases superfamily. HutI family. The cofactor is Zn(2+). It depends on Fe(3+) as a cofactor.

The protein resides in the cytoplasm. The catalysed reaction is 4-imidazolone-5-propanoate + H2O = N-formimidoyl-L-glutamate. Its pathway is amino-acid degradation; L-histidine degradation into L-glutamate; N-formimidoyl-L-glutamate from L-histidine: step 3/3. Functionally, catalyzes the hydrolytic cleavage of the carbon-nitrogen bond in imidazolone-5-propanoate to yield N-formimidoyl-L-glutamate. It is the third step in the universal histidine degradation pathway. In Streptococcus pyogenes serotype M1, this protein is Imidazolonepropionase.